The sequence spans 353 residues: Protein MGF 360-13L (353 aa).

It belongs to the asfivirus MGF 360 family.

Functionally, plays a role in virus cell tropism, and may be required for efficient virus replication in macrophages. This Ornithodoros (relapsing fever ticks) protein is Protein MGF 360-13L.